The chain runs to 443 residues: Xaa-Pro dipeptidase (443 aa).

Residues aspartate 246, aspartate 257, histidine 339, glutamate 384, and glutamate 423 each coordinate Mn(2+).

This sequence belongs to the peptidase M24B family. Bacterial-type prolidase subfamily. Mn(2+) is required as a cofactor.

The catalysed reaction is Xaa-L-Pro dipeptide + H2O = an L-alpha-amino acid + L-proline. Functionally, splits dipeptides with a prolyl residue in the C-terminal position. The sequence is that of Xaa-Pro dipeptidase from Salmonella arizonae (strain ATCC BAA-731 / CDC346-86 / RSK2980).